The sequence spans 444 residues: MSKKYYFIGIKGTGMGPLAQILHDQGNEVLGSDIDTYTYTQAPLEAAGIKILTFDARNIDANQDAIFVRGNAFNNDQIEVARALEIGVTMVSYPEAVQEQISQTTSIAVAGAHGKTSTTGLLAHVLKNIAPTSYLIGDGTGRGVPNSQFFVVEADEYRRHFKDYAPDYAILTNIDFDHPDYYTGIEDVTSAFADFANNVKKAIFAWGDDEHLRSLKPSADVYYYGVNPERDDFVATNIHKSTQGSHFDVVFRGKDLGEFAVPLFGQHGILNALAVIAVSYMEEVDLDLIRQYLLTYQGVKRRFSEKQIADITVIDDYAHHPTEITATLDAARQKYPNKKIIAIFQPHTFSRVIAYKDEFASSLEAADQVYLANIFGSAREQAGTITSKDLGSEISKFGGIIEENDMSLLMPYENAVMVFMGAGDIEKYEFAYEKLLGQLRTDLT.

111 to 117 (GAHGKTS) contacts ATP.

The protein belongs to the MurCDEF family.

The protein resides in the cytoplasm. It carries out the reaction UDP-N-acetyl-alpha-D-muramate + L-alanine + ATP = UDP-N-acetyl-alpha-D-muramoyl-L-alanine + ADP + phosphate + H(+). It functions in the pathway cell wall biogenesis; peptidoglycan biosynthesis. Functionally, cell wall formation. This chain is UDP-N-acetylmuramate--L-alanine ligase, found in Leuconostoc mesenteroides subsp. mesenteroides (strain ATCC 8293 / DSM 20343 / BCRC 11652 / CCM 1803 / JCM 6124 / NCDO 523 / NBRC 100496 / NCIMB 8023 / NCTC 12954 / NRRL B-1118 / 37Y).